A 228-amino-acid chain; its full sequence is Tol-Pal system protein TolQ (228 aa).

The next 3 membrane-spanning stretches (helical) occupy residues 16-36 (IVVQ…WAII), 137-157 (VSPY…FMAL), and 172-192 (IAEA…AVMA).

It belongs to the ExbB/TolQ family. As to quaternary structure, the Tol-Pal system is composed of five core proteins: the inner membrane proteins TolA, TolQ and TolR, the periplasmic protein TolB and the outer membrane protein Pal. They form a network linking the inner and outer membranes and the peptidoglycan layer.

Its subcellular location is the cell inner membrane. Its function is as follows. Part of the Tol-Pal system, which plays a role in outer membrane invagination during cell division and is important for maintaining outer membrane integrity. The sequence is that of Tol-Pal system protein TolQ from Haemophilus influenzae (strain ATCC 51907 / DSM 11121 / KW20 / Rd).